The sequence spans 306 residues: Formimidoylglutamase (306 aa).

Over residues 1–13 (MFQNATDWTPTST) the composition is skewed to polar residues. The interval 1–36 (MFQNATDWTPTSTDPRDEQFGGVVEPVPTPSDADDY) is disordered. Positions 123, 147, 149, 151, 234, and 236 each coordinate Mn(2+).

The protein belongs to the arginase family. Mn(2+) serves as cofactor.

It carries out the reaction N-formimidoyl-L-glutamate + H2O = formamide + L-glutamate. Its pathway is amino-acid degradation; L-histidine degradation into L-glutamate; L-glutamate from N-formimidoyl-L-glutamate (hydrolase route): step 1/1. Catalyzes the conversion of N-formimidoyl-L-glutamate to L-glutamate and formamide. The chain is Formimidoylglutamase from Halobacterium salinarum (strain ATCC 29341 / DSM 671 / R1).